The chain runs to 381 residues: UDP-4-amino-4-deoxy-L-arabinose--oxoglutarate aminotransferase (381 aa).

The residue at position 182 (Lys-182) is an N6-(pyridoxal phosphate)lysine.

This sequence belongs to the DegT/DnrJ/EryC1 family. ArnB subfamily. Homodimer. It depends on pyridoxal 5'-phosphate as a cofactor.

The catalysed reaction is UDP-4-amino-4-deoxy-beta-L-arabinose + 2-oxoglutarate = UDP-beta-L-threo-pentopyranos-4-ulose + L-glutamate. It participates in nucleotide-sugar biosynthesis; UDP-4-deoxy-4-formamido-beta-L-arabinose biosynthesis; UDP-4-deoxy-4-formamido-beta-L-arabinose from UDP-alpha-D-glucuronate: step 2/3. It functions in the pathway bacterial outer membrane biogenesis; lipopolysaccharide biosynthesis. Its function is as follows. Catalyzes the conversion of UDP-4-keto-arabinose (UDP-Ara4O) to UDP-4-amino-4-deoxy-L-arabinose (UDP-L-Ara4N). The modified arabinose is attached to lipid A and is required for resistance to polymyxin and cationic antimicrobial peptides. This is UDP-4-amino-4-deoxy-L-arabinose--oxoglutarate aminotransferase from Photorhabdus laumondii subsp. laumondii (strain DSM 15139 / CIP 105565 / TT01) (Photorhabdus luminescens subsp. laumondii).